The chain runs to 388 residues: 3-oxo-Delta(4,5)-steroid 5-beta-reductase (388 aa).

An N-acetylserine modification is found at serine 2. NADP(+) contacts are provided by residues 35–37, 63–64, 81–82, threonine 105, and glutamine 143; these read TGI, RR, and DV. Catalysis depends on residues lysine 147 and tyrosine 178. Residues tyrosine 178, isoleucine 205, and 212–214 contribute to the NADP(+) site; that span reads SLM.

Belongs to the short-chain dehydrogenases/reductases (SDR) family. Highly divergent. As to quaternary structure, homodimer. Expressed in roots, stems, leaves, flowers, seeds and siliques. Expressed in the vascular bundles.

It catalyses the reaction 5beta-cholestan-3-one + NADP(+) = cholest-4-en-3-one + NADPH + H(+). The enzyme catalyses 4,5beta-dihydrocortisone + NADP(+) = cortisone + NADPH + H(+). Involved in vascular strand development. Catalyzes the stereospecific conversion of progesterone to 5-beta-pregnane-3,20-dione. Can use progesterone, testosterone, 21-acetyl cortexone, 2-cyclohexenone, but-1-en-3-one, ethyl acrylate, ethylmethacrylate, cortisone and canarigenone as substrates, lower activity with 3-methyl-2-cyclohexenone and 3,5,5-trimethyl-2-cyclohexenone as substrate, and no activity with canarigenin, canarigenin digitoxoside and pregnenolone. May be involved in the formation of 5-beta phytoecdysteroids. The polypeptide is 3-oxo-Delta(4,5)-steroid 5-beta-reductase (VEP1) (Arabidopsis thaliana (Mouse-ear cress)).